A 280-amino-acid polypeptide reads, in one-letter code: Putative pyruvate, phosphate dikinase regulatory protein (280 aa).

Gly-158 to Thr-165 is an ADP binding site.

This sequence belongs to the pyruvate, phosphate/water dikinase regulatory protein family. PDRP subfamily.

It catalyses the reaction N(tele)-phospho-L-histidyl/L-threonyl-[pyruvate, phosphate dikinase] + ADP = N(tele)-phospho-L-histidyl/O-phospho-L-threonyl-[pyruvate, phosphate dikinase] + AMP + H(+). The enzyme catalyses N(tele)-phospho-L-histidyl/O-phospho-L-threonyl-[pyruvate, phosphate dikinase] + phosphate + H(+) = N(tele)-phospho-L-histidyl/L-threonyl-[pyruvate, phosphate dikinase] + diphosphate. Bifunctional serine/threonine kinase and phosphorylase involved in the regulation of the pyruvate, phosphate dikinase (PPDK) by catalyzing its phosphorylation/dephosphorylation. The sequence is that of Putative pyruvate, phosphate dikinase regulatory protein from Lactobacillus johnsonii (strain CNCM I-12250 / La1 / NCC 533).